Consider the following 170-residue polypeptide: Peptide deformylase (170 aa).

Fe cation contacts are provided by cysteine 91 and histidine 133. Residue glutamate 134 is part of the active site. Histidine 137 provides a ligand contact to Fe cation.

The protein belongs to the polypeptide deformylase family. It depends on Fe(2+) as a cofactor.

It carries out the reaction N-terminal N-formyl-L-methionyl-[peptide] + H2O = N-terminal L-methionyl-[peptide] + formate. Removes the formyl group from the N-terminal Met of newly synthesized proteins. Requires at least a dipeptide for an efficient rate of reaction. N-terminal L-methionine is a prerequisite for activity but the enzyme has broad specificity at other positions. In Yersinia pseudotuberculosis serotype O:1b (strain IP 31758), this protein is Peptide deformylase.